Here is a 512-residue protein sequence, read N- to C-terminus: GMP synthase [glutamine-hydrolyzing] (512 aa).

The Glutamine amidotransferase type-1 domain maps to 3–196; it reads NILILDFGSQ…VKHICQASET (194 aa). Cysteine 80 acts as the Nucleophile in catalysis. Residues histidine 169 and glutamate 171 contribute to the active site. Residues 197-387 enclose the GMPS ATP-PPase domain; sequence WKIETIEKQL…LGLPDVLISR (191 aa). An ATP-binding site is contributed by 225–231; the sequence is SGGVDSS.

As to quaternary structure, homodimer.

It catalyses the reaction XMP + L-glutamine + ATP + H2O = GMP + L-glutamate + AMP + diphosphate + 2 H(+). Its pathway is purine metabolism; GMP biosynthesis; GMP from XMP (L-Gln route): step 1/1. Functionally, catalyzes the synthesis of GMP from XMP. The protein is GMP synthase [glutamine-hydrolyzing] of Chlamydia caviae (strain ATCC VR-813 / DSM 19441 / 03DC25 / GPIC) (Chlamydophila caviae).